The sequence spans 139 residues: Drosulfakinins (139 aa).

The signal sequence occupies residues 1-35; that stretch reads MGHRGMGCAHFATMAMPLWALTFYLLVVLPVPSQT. The propeptide occupies 36–71; it reads ASVEVGKEERRLQDLDPKMGSEAGNTDGLSLARFGS. F80 carries the phenylalanine amide modification. A propeptide spanning residues 81 to 109 is cleaved from the precursor; sequence GHRVPIISRPVIPIELDLLMDNEDDRTMS. Y115 is subject to Sulfotyrosine. F120 carries the phenylalanine amide modification. Y132 is modified (sulfotyrosine). At F137 the chain carries Phenylalanine amide.

The protein belongs to the gastrin/cholecystokinin family.

It is found in the secreted. Functionally, drosulfakinin-0 (DSK 0) plays diverse biological roles including regulating gut muscle contraction in adults but not in larvae. This Drosophila pseudoobscura pseudoobscura (Fruit fly) protein is Drosulfakinins.